A 175-amino-acid chain; its full sequence is Protein MODIFYING WALL LIGNIN-1 (175 aa).

A signal peptide spans 1–24 (MFIFLFGLAAFFLCLSAEFQKAKA). At 25–52 (LLRAQVFLKGKDLKWDGESCYLPENRAF) the chain is on the cytoplasmic side. Residues 53 to 73 (GLGIAALVCVSVAQIVGNVVI) form a helical membrane-spanning segment. Topologically, residues 74–86 (CRGFTKTDKTRTT) are extracellular. A helical transmembrane segment spans residues 87–107 (IFCIILLLFSWVNFAVAVTLI). At 108–135 (SVGASMNREQIYGKGWLNRECYLVKDGV) the chain is on the cytoplasmic side. A helical membrane pass occupies residues 136–156 (FAASGFLSVTTMAAILGAFAF). The Extracellular segment spans residues 157-175 (KVKPSLQVENHDKRHTQNV).

This sequence belongs to the DESIGUAL family. As to quaternary structure, interacts with CRK19.

The protein localises to the cell membrane. Its function is as follows. Together with MWL2, contributes to secondary cell wall biology, specifically lignin biosynthesis. In Arabidopsis thaliana (Mouse-ear cress), this protein is Protein MODIFYING WALL LIGNIN-1.